Here is a 676-residue protein sequence, read N- to C-terminus: Cysteine-rich receptor-like protein kinase 8 (676 aa).

Positions 1–34 are cleaved as a signal peptide; the sequence is MYIVSMFGLAGLEALICFIFLFLFSFLTSFKASA. Over 35-291 the chain is Extracellular; that stretch reads QNPFYLNHDC…IPGKSGNSTV (257 aa). 2 consecutive Gnk2-homologous domains span residues 38-142 and 151-255; these read FYLN…HKNF and ELIM…LYAF. N46, N53, N71, N114, N159, N187, N257, and N288 each carry an N-linked (GlcNAc...) asparagine glycan. The helical transmembrane segment at 292 to 312 threads the bilayer; the sequence is LVVAIVVLAVLLFIALVGYCF. The Cytoplasmic segment spans residues 313–676; the sequence is LAQRTKKTFD…DELITDLYPR (364 aa). One can recognise a Protein kinase domain in the interval 353 to 639; sequence FAESNKIGRG…TLPVPRQPGF (287 aa). ATP contacts are provided by residues 359–367 and K381; that span reads IGRGGFGEV. Phosphotyrosine is present on Y426. The Proton acceptor role is filled by D478. S482 is subject to Phosphoserine. Position 518 is a phosphothreonine (T518). Y526 carries the post-translational modification Phosphotyrosine. The tract at residues 640-666 is disordered; the sequence is FIQSSPVKDPTDSDQSTTTKSTPASID. Over residues 652–662 the composition is skewed to low complexity; sequence SDQSTTTKSTP.

Belongs to the protein kinase superfamily. Ser/Thr protein kinase family. CRK subfamily.

The protein localises to the membrane. The enzyme catalyses L-seryl-[protein] + ATP = O-phospho-L-seryl-[protein] + ADP + H(+). It catalyses the reaction L-threonyl-[protein] + ATP = O-phospho-L-threonyl-[protein] + ADP + H(+). This chain is Cysteine-rich receptor-like protein kinase 8 (CRK8), found in Arabidopsis thaliana (Mouse-ear cress).